The following is a 177-amino-acid chain: Peptide deformylase (177 aa).

Fe cation-binding residues include Cys98 and His140. Glu141 is a catalytic residue. His144 provides a ligand contact to Fe cation.

It belongs to the polypeptide deformylase family. Fe(2+) is required as a cofactor.

The enzyme catalyses N-terminal N-formyl-L-methionyl-[peptide] + H2O = N-terminal L-methionyl-[peptide] + formate. Functionally, removes the formyl group from the N-terminal Met of newly synthesized proteins. Requires at least a dipeptide for an efficient rate of reaction. N-terminal L-methionine is a prerequisite for activity but the enzyme has broad specificity at other positions. The chain is Peptide deformylase from Zymomonas mobilis subsp. mobilis (strain ATCC 31821 / ZM4 / CP4).